A 63-amino-acid chain; its full sequence is 2-hydroxymuconate tautomerase (63 aa).

Residue P2 is the Proton acceptor; via imino nitrogen of the active site.

The protein belongs to the 4-oxalocrotonate tautomerase family. Homohexamer.

It carries out the reaction (2Z,4E)-2-hydroxyhexa-2,4-dienedioate = (3E)-2-oxohex-3-enedioate. It participates in xenobiotic degradation; toluene degradation. Its function is as follows. Catalyzes the ketonization of 2-hydroxymuconate stereoselectively to yield 2-oxo-3-hexenedioate. This is 2-hydroxymuconate tautomerase (dmpI) from Pseudomonas sp. (strain CF600).